The sequence spans 243 residues: Probable transcriptional regulatory protein BB_0025 (243 aa).

It belongs to the TACO1 family.

Its subcellular location is the cytoplasm. In Borreliella burgdorferi (strain ATCC 35210 / DSM 4680 / CIP 102532 / B31) (Borrelia burgdorferi), this protein is Probable transcriptional regulatory protein BB_0025.